Here is a 121-residue protein sequence, read N- to C-terminus: Large ribosomal subunit protein bL12 (121 aa).

It belongs to the bacterial ribosomal protein bL12 family. As to quaternary structure, homodimer. Part of the ribosomal stalk of the 50S ribosomal subunit. Forms a multimeric L10(L12)X complex, where L10 forms an elongated spine to which 2 to 4 L12 dimers bind in a sequential fashion. Binds GTP-bound translation factors.

Its function is as follows. Forms part of the ribosomal stalk which helps the ribosome interact with GTP-bound translation factors. Is thus essential for accurate translation. The polypeptide is Large ribosomal subunit protein bL12 (Pseudomonas syringae pv. tomato (strain ATCC BAA-871 / DC3000)).